Here is a 290-residue protein sequence, read N- to C-terminus: Ribosomal RNA small subunit methyltransferase A (290 aa).

Residues Asn-27, Leu-29, Gly-54, Glu-75, Asp-100, and Asn-125 each contribute to the S-adenosyl-L-methionine site.

The protein belongs to the class I-like SAM-binding methyltransferase superfamily. rRNA adenine N(6)-methyltransferase family. RsmA subfamily.

It is found in the cytoplasm. It carries out the reaction adenosine(1518)/adenosine(1519) in 16S rRNA + 4 S-adenosyl-L-methionine = N(6)-dimethyladenosine(1518)/N(6)-dimethyladenosine(1519) in 16S rRNA + 4 S-adenosyl-L-homocysteine + 4 H(+). Specifically dimethylates two adjacent adenosines (A1518 and A1519) in the loop of a conserved hairpin near the 3'-end of 16S rRNA in the 30S particle. May play a critical role in biogenesis of 30S subunits. The chain is Ribosomal RNA small subunit methyltransferase A from Streptococcus thermophilus (strain CNRZ 1066).